A 206-amino-acid chain; its full sequence is Octanoyltransferase (206 aa).

The BPL/LPL catalytic domain maps to 30–206 (PETNDEIWLV…EFVTLLNNSI (177 aa)). Residues 69–76 (RGGQVTYH), 137–139 (SLG), and 150–152 (GIA) each bind substrate. Cys168 serves as the catalytic Acyl-thioester intermediate.

The protein belongs to the LipB family.

The protein localises to the cytoplasm. It catalyses the reaction octanoyl-[ACP] + L-lysyl-[protein] = N(6)-octanoyl-L-lysyl-[protein] + holo-[ACP] + H(+). The protein operates within protein modification; protein lipoylation via endogenous pathway; protein N(6)-(lipoyl)lysine from octanoyl-[acyl-carrier-protein]: step 1/2. In terms of biological role, catalyzes the transfer of endogenously produced octanoic acid from octanoyl-acyl-carrier-protein onto the lipoyl domains of lipoate-dependent enzymes. Lipoyl-ACP can also act as a substrate although octanoyl-ACP is likely to be the physiological substrate. This is Octanoyltransferase from Francisella tularensis subsp. novicida (strain U112).